A 176-amino-acid chain; its full sequence is MKSDFVEVCILGKTVGLKGALKLHDRSDFPNQFKNGAKFYDINSKEFVIKSYDRNNNLVIFENYDSIDLAKTLVNYILYRSINDTIRDCKLAKDEFFYFDIIGCNVFEDKILLGEVIDILEVGAGFLFSIKTEGDLVKAGLNSNFYIPYNDNFTQNIDIKSKKIQVKNSLDILKNS.

One can recognise a PRC barrel domain in the interval 93-172 (KDEFFYFDII…KIQVKNSLDI (80 aa)).

This sequence belongs to the RimM family. As to quaternary structure, binds ribosomal protein uS19.

Its subcellular location is the cytoplasm. An accessory protein needed during the final step in the assembly of 30S ribosomal subunit, possibly for assembly of the head region. Essential for efficient processing of 16S rRNA. May be needed both before and after RbfA during the maturation of 16S rRNA. It has affinity for free ribosomal 30S subunits but not for 70S ribosomes. This is Ribosome maturation factor RimM from Campylobacter fetus subsp. fetus (strain 82-40).